The sequence spans 216 residues: Protein Syd (216 aa).

It belongs to the Syd family.

The protein resides in the cell inner membrane. Interacts with the SecY protein in vivo. May bind preferentially to an uncomplexed state of SecY, thus functioning either as a chelating agent for excess SecY in the cell or as a regulatory factor that negatively controls the translocase function. This is Protein Syd from Shewanella baltica (strain OS185).